A 119-amino-acid polypeptide reads, in one-letter code: Holo-[acyl-carrier-protein] synthase (119 aa).

Mg(2+) contacts are provided by Asp-8 and Glu-58.

This sequence belongs to the P-Pant transferase superfamily. AcpS family. It depends on Mg(2+) as a cofactor.

Its subcellular location is the cytoplasm. It catalyses the reaction apo-[ACP] + CoA = holo-[ACP] + adenosine 3',5'-bisphosphate + H(+). Transfers the 4'-phosphopantetheine moiety from coenzyme A to a Ser of acyl-carrier-protein. This is Holo-[acyl-carrier-protein] synthase from Bacillus cereus (strain ATCC 14579 / DSM 31 / CCUG 7414 / JCM 2152 / NBRC 15305 / NCIMB 9373 / NCTC 2599 / NRRL B-3711).